The following is a 120-amino-acid chain: MQLYLKDGMEIREVQFTNEEVQNYCELLNIKYDHYVPTLMCAKLWPQFELFQSFSKKPIILKETHIKTQHQLQVDCTYEATLHKVSQKLIKNIIKYTYGLEINKDKKHCMYIKQIFIEVR.

This chain is Protein VraC, found in Staphylococcus epidermidis (strain ATCC 12228 / FDA PCI 1200).